The following is a 295-amino-acid chain: UDP-N-acetylenolpyruvoylglucosamine reductase (295 aa).

The 165-residue stretch at 24–188 (KVGGDAEIFF…LKAVFKVNKG (165 aa)) folds into the FAD-binding PCMH-type domain. R168 is an active-site residue. Residue S217 is the Proton donor of the active site. The active site involves E287.

The protein belongs to the MurB family. FAD is required as a cofactor.

Its subcellular location is the cytoplasm. The catalysed reaction is UDP-N-acetyl-alpha-D-muramate + NADP(+) = UDP-N-acetyl-3-O-(1-carboxyvinyl)-alpha-D-glucosamine + NADPH + H(+). Its pathway is cell wall biogenesis; peptidoglycan biosynthesis. In terms of biological role, cell wall formation. This Rickettsia akari (strain Hartford) protein is UDP-N-acetylenolpyruvoylglucosamine reductase.